A 485-amino-acid polypeptide reads, in one-letter code: NADH-quinone oxidoreductase subunit N (485 aa).

Helical transmembrane passes span 8–28, 35–55, 75–95, 105–125, 127–147, 159–179, 203–223, 235–255, 271–291, 297–317, 326–346, 373–393, 408–427, and 449–469; these read LIALLPLLIVGLTVVVVMLSI, FVNATLAVVGLNLALFSLYFV, FYTGLVILASLATCTFAYPWL, FYLLVLIAALGGVVLASASHL, SLFIGIELISLPLFGLVGYAF, YTILSAAASSFLLFGMALVYA, LLAGLGLMIVGFGFKLSLVPF, PAPVSTFLATASKIAIFGVLM, TVLGIIAVASMLFGNLMAISQ, LLGYSSIAHLGYLLVALIAVQ, VGVYLAGYLFSSLGAFGVVSL, AAVMTVMMLSLAGIPMTLGFI, WWLTGAVVLGSAIGLYYYLR, and AFTAGGVVVLISAILVLVLGI.

It belongs to the complex I subunit 2 family. NDH-1 is composed of 13 different subunits. Subunits NuoA, H, J, K, L, M, N constitute the membrane sector of the complex.

Its subcellular location is the cell inner membrane. The catalysed reaction is a quinone + NADH + 5 H(+)(in) = a quinol + NAD(+) + 4 H(+)(out). Functionally, NDH-1 shuttles electrons from NADH, via FMN and iron-sulfur (Fe-S) centers, to quinones in the respiratory chain. The immediate electron acceptor for the enzyme in this species is believed to be ubiquinone. Couples the redox reaction to proton translocation (for every two electrons transferred, four hydrogen ions are translocated across the cytoplasmic membrane), and thus conserves the redox energy in a proton gradient. This Erwinia tasmaniensis (strain DSM 17950 / CFBP 7177 / CIP 109463 / NCPPB 4357 / Et1/99) protein is NADH-quinone oxidoreductase subunit N.